A 496-amino-acid polypeptide reads, in one-letter code: Adenosine transporter 1 (496 aa).

Over 1 to 26 the chain is Cytoplasmic; that stretch reads MSSHTSTPNHASAAPPRKWYDMTSAE. Residues 27–47 form a helical membrane-spanning segment; sequence FYVYVVAFMCGISMLMPINAV. At 48–77 the chain is on the extracellular side; it reads FSAPSYMLQYYLYATKDPNHVPQMTNFWSN. Residues 78–98 form a helical membrane-spanning segment; it reads VMTYYNLIGLVTGLVMEPLTL. The Cytoplasmic portion of the chain corresponds to 99 to 107; the sequence is LKSFRKIPM. The chain crosses the membrane as a helical span at residues 108 to 128; it reads LVRLLGGLCILIVEIIVLMAV. At 129-135 the chain is on the extracellular side; sequence PARGTTE. The helical transmembrane segment at 136–156 threads the bilayer; the sequence is GGAVATMCIAGFIGGLGKSIF. At 157-172 the chain is on the cytoplasmic side; it reads ESTVYGMFGAFPPSFT. The helical transmembrane segment at 173-193 threads the bilayer; it reads SIMMGGVGISGVLTSLIQIIV. At 194-208 the chain is on the extracellular side; it reads KAALPDTYEGVKKQS. The chain crosses the membrane as a helical span at residues 209-229; that stretch reads YIYYSLDVGIQAATFIALIMM. The Cytoplasmic segment spans residues 230–336; the sequence is RFNSFAQLHF…SIISVLRSIK (107 aa). A helical transmembrane segment spans residues 337–357; it reads WMFVSCAFVFVVTLFLFPGIA. Topologically, residues 358–365 are extracellular; sequence TGMFPESK. A helical membrane pass occupies residues 366–386; the sequence is WFATVAVFIFNCCDVLGRVAP. At 387-399 the chain is on the cytoplasmic side; the sequence is ALRFMWPRSYNQR. A helical membrane pass occupies residues 400–420; sequence WIIVAASFARVIFVPLLLLYS. Topologically, residues 421 to 431 are extracellular; the sequence is YHYIPSEAYGY. A helical membrane pass occupies residues 432-452; that stretch reads VIMVIFGFSSGYVASMSLTLG. Residues 453–464 lie on the Cytoplasmic side of the membrane; it reads PQSKGIDNDGKR. A helical transmembrane segment spans residues 465-485; that stretch reads FVAGTLMGISILVGGTIGTVL. Topologically, residues 486–496 are extracellular; the sequence is SIMTQTIREKY.

This sequence belongs to the SLC29A/ENT transporter (TC 2.A.57) family.

The protein resides in the membrane. The enzyme catalyses adenosine(in) = adenosine(out). Functionally, adenosine transporter. The polypeptide is Adenosine transporter 1 (Crithidia fasciculata).